The following is a 238-amino-acid chain: Ribonuclease 3 (238 aa).

Residues Leu9 to Gly141 enclose the RNase III domain. Glu54 contributes to the Mg(2+) binding site. Residue Asp58 is part of the active site. Mg(2+) is bound by residues Asp127 and Glu130. The active site involves Glu130. The DRBM domain occupies Asp168–Gly237.

This sequence belongs to the ribonuclease III family. Homodimer. Mg(2+) serves as cofactor.

It is found in the cytoplasm. It carries out the reaction Endonucleolytic cleavage to 5'-phosphomonoester.. Its function is as follows. Digests double-stranded RNA. Involved in the processing of primary rRNA transcript to yield the immediate precursors to the large and small rRNAs (23S and 16S). Processes some mRNAs, and tRNAs when they are encoded in the rRNA operon. Processes pre-crRNA and tracrRNA of type II CRISPR loci if present in the organism. The sequence is that of Ribonuclease 3 from Pseudothermotoga lettingae (strain ATCC BAA-301 / DSM 14385 / NBRC 107922 / TMO) (Thermotoga lettingae).